Consider the following 498-residue polypeptide: ATP synthase subunit beta, chloroplastic (498 aa).

Residue Thr-6 is modified to Phosphothreonine. A Phosphoserine modification is found at Ser-13. Position 172-179 (172-179 (GGAGVGKT)) interacts with ATP.

The protein belongs to the ATPase alpha/beta chains family. F-type ATPases have 2 components, CF(1) - the catalytic core - and CF(0) - the membrane proton channel. CF(1) has five subunits: alpha(3), beta(3), gamma(1), delta(1), epsilon(1). CF(0) has four main subunits: a(1), b(1), b'(1) and c(9-12).

The protein localises to the plastid. It is found in the chloroplast thylakoid membrane. The catalysed reaction is ATP + H2O + 4 H(+)(in) = ADP + phosphate + 5 H(+)(out). In terms of biological role, produces ATP from ADP in the presence of a proton gradient across the membrane. The catalytic sites are hosted primarily by the beta subunits. The chain is ATP synthase subunit beta, chloroplastic from Draba nemorosa (Woodland whitlowgrass).